The chain runs to 443 residues: Nitrate/nitrite binding protein NrtA (443 aa).

The first 25 residues, 1–25, serve as a signal peptide directing secretion; it reads MSQFSRRKFLLTAGGTAAAALWLNA. A lipid anchor (N-palmitoyl cysteine) is attached at Cys26. Residue Cys26 is the site of S-diacylglycerol cysteine attachment. Low complexity predominate over residues 31–46; the sequence is SSTDTTGSTSTPAPSG. The disordered stretch occupies residues 31–52; sequence SSTDTTGSTSTPAPSGTSGGDA. Residues Trp96, Gln150, His195, Gly239, and Lys268 each contribute to the nitrate site.

The protein belongs to the CmpA/NrtA family. In terms of assembly, the complex is composed of two ATP-binding proteins (NrtC and NrtD), two transmembrane proteins (NrtB) and a solute-binding protein (NrtA). NrtA can form homotrimers. The N-terminus is blocked.

It localises to the cell inner membrane. Its function is as follows. Part of the ABC transporter complex NrtABCD involved in nitrate uptake. The complex is probably also involved in nitrite transport. NrtA is the substrate-binding protein. Binds both nitrate and nitrite with high affinity. This Synechococcus elongatus (strain ATCC 33912 / PCC 7942 / FACHB-805) (Anacystis nidulans R2) protein is Nitrate/nitrite binding protein NrtA.